Here is a 207-residue protein sequence, read N- to C-terminus: Vascular endothelial growth factor B (207 aa).

The first 21 residues, 1-21 (MSPLLRRLLLVALLQLACTQA), serve as a signal peptide directing secretion. Cystine bridges form between Cys-78/Cys-122 and Cys-82/Cys-124. Residues 140 to 182 (IPHHRPQPRSVLSWDSAPGASSPADIIHPTPAPGPSAHAAPSA) form a disordered region.

The protein belongs to the PDGF/VEGF growth factor family. As to quaternary structure, homodimer; disulfide-linked. Can also form heterodimer with VEGF.

The protein resides in the secreted. Its function is as follows. Growth factor for endothelial cells. VEGF-B167 binds heparin and neuropilin-1 whereas the binding to neuropilin-1 of VEGF-B186 is regulated by proteolysis. The polypeptide is Vascular endothelial growth factor B (Vegfb) (Rattus norvegicus (Rat)).